Consider the following 278-residue polypeptide: HTH-type transcriptional activator RhaS (278 aa).

In terms of domain architecture, HTH araC/xylS-type spans 174 to 272; it reads NLLLAWLEDH…NWSPRDIRQG (99 aa). 2 DNA-binding regions (H-T-H motif) span residues 191-212 and 239-262; these read DAVADQFSLSLRTLHRQLKQQT and VTDIAYRCGFSDSNHFSTLFRREF.

In terms of assembly, binds DNA as a dimer.

The protein resides in the cytoplasm. In terms of biological role, activates expression of the rhaBAD and rhaT operons. The sequence is that of HTH-type transcriptional activator RhaS from Escherichia coli O81 (strain ED1a).